Consider the following 398-residue polypeptide: Histidinol-phosphate aminotransferase (398 aa).

Positions 1–10 (MTGQRATPQP) are enriched in polar residues. The segment at 1–30 (MTGQRATPQPTLDDLPLRDDLRGKSPYGAP) is disordered. Lys234 is modified (N6-(pyridoxal phosphate)lysine).

This sequence belongs to the class-II pyridoxal-phosphate-dependent aminotransferase family. Histidinol-phosphate aminotransferase subfamily. Homodimer. Pyridoxal 5'-phosphate serves as cofactor.

The enzyme catalyses L-histidinol phosphate + 2-oxoglutarate = 3-(imidazol-4-yl)-2-oxopropyl phosphate + L-glutamate. It participates in amino-acid biosynthesis; L-histidine biosynthesis; L-histidine from 5-phospho-alpha-D-ribose 1-diphosphate: step 7/9. This is Histidinol-phosphate aminotransferase from Mycobacterium avium (strain 104).